A 405-amino-acid chain; its full sequence is CCA-adding enzyme (405 aa).

2 residues coordinate ATP: glycine 8 and arginine 11. CTP is bound by residues glycine 8 and arginine 11. Residues glutamate 21 and aspartate 23 each coordinate Mg(2+). The ATP site is built by arginine 91, arginine 137, and arginine 140. CTP is bound by residues arginine 91, arginine 137, and arginine 140. In terms of domain architecture, HD spans proline 220 to tryptophan 326.

This sequence belongs to the tRNA nucleotidyltransferase/poly(A) polymerase family. Bacterial CCA-adding enzyme type 2 subfamily. Requires Mg(2+) as cofactor.

It carries out the reaction a tRNA precursor + 2 CTP + ATP = a tRNA with a 3' CCA end + 3 diphosphate. The enzyme catalyses a tRNA with a 3' CCA end + 2 CTP + ATP = a tRNA with a 3' CCACCA end + 3 diphosphate. Catalyzes the addition and repair of the essential 3'-terminal CCA sequence in tRNAs without using a nucleic acid template. Adds these three nucleotides in the order of C, C, and A to the tRNA nucleotide-73, using CTP and ATP as substrates and producing inorganic pyrophosphate. tRNA 3'-terminal CCA addition is required both for tRNA processing and repair. Also involved in tRNA surveillance by mediating tandem CCA addition to generate a CCACCA at the 3' terminus of unstable tRNAs. While stable tRNAs receive only 3'-terminal CCA, unstable tRNAs are marked with CCACCA and rapidly degraded. This chain is CCA-adding enzyme, found in Hamiltonella defensa subsp. Acyrthosiphon pisum (strain 5AT).